We begin with the raw amino-acid sequence, 411 residues long: Arginine deiminase (411 aa).

The Amidino-cysteine intermediate role is filled by Cys-401.

It belongs to the arginine deiminase family.

It localises to the cytoplasm. The enzyme catalyses L-arginine + H2O = L-citrulline + NH4(+). It participates in amino-acid degradation; L-arginine degradation via ADI pathway; carbamoyl phosphate from L-arginine: step 1/2. This Staphylococcus aureus (strain JH9) protein is Arginine deiminase.